Consider the following 243-residue polypeptide: MKKLVLAALLASFTFGASAAEKINFGVSATYPPFESIGANNEIVGFDIDLAKALCKQMQAECTFTNHAFDSLIPSLKFRKYDAVISGMDITPERSKQVSFTTPYYENSAVVIAKKDTYKTFADLKGKRIGMENGTTHQKYIQDQHPEVKTVSYDSYQNAFIDLKNGRIDGVFGDTAVVNEWLKTNPQLGVATEKVTDPQYFGTGLGIAVRPDNKALLEKLNNALAAIKADGTYQKISDQWFPQ.

Positions 1-19 (MKKLVLAALLASFTFGASA) are cleaved as a signal peptide.

Belongs to the bacterial solute-binding protein 3 family. As to quaternary structure, the complex is composed of two ATP-binding proteins (ArtP), two transmembrane proteins (ArtM and ArtQ) and two solute-binding proteins (ArtJ and ArtI).

It localises to the periplasm. In terms of biological role, part of the ABC transporter complex ArtPIQMJ involved in arginine transport. Binds L-arginine with high affinity. This Escherichia coli (strain K12) protein is ABC transporter arginine-binding protein 1 (artJ).